Reading from the N-terminus, the 369-residue chain is 3-isopropylmalate dehydrogenase (369 aa).

4 residues coordinate substrate: Arg98, Arg108, Arg136, and Asp227. 3 residues coordinate Mg(2+): Asp227, Asp251, and Asp255. Residue 290-302 (GSAPDIAGKGIAN) participates in NAD(+) binding.

This sequence belongs to the isocitrate and isopropylmalate dehydrogenases family. LeuB type 1 subfamily. Homodimer. Mg(2+) is required as a cofactor. Mn(2+) serves as cofactor.

The protein localises to the cytoplasm. It catalyses the reaction (2R,3S)-3-isopropylmalate + NAD(+) = 4-methyl-2-oxopentanoate + CO2 + NADH. It functions in the pathway amino-acid biosynthesis; L-leucine biosynthesis; L-leucine from 3-methyl-2-oxobutanoate: step 3/4. Functionally, catalyzes the oxidation of 3-carboxy-2-hydroxy-4-methylpentanoate (3-isopropylmalate) to 3-carboxy-4-methyl-2-oxopentanoate. The product decarboxylates to 4-methyl-2 oxopentanoate. The sequence is that of 3-isopropylmalate dehydrogenase from Gluconobacter oxydans (strain 621H) (Gluconobacter suboxydans).